Here is a 406-residue protein sequence, read N- to C-terminus: MTDESSVRTPKALPDGVSQATVGVRGGMLRSGFEETAEAMYLTSGYVYGSAAVAEKSFAGELDHYVYSRYGNPTVSVFEERLRLIEGAPAAFATASGMAAVFTSLGALLGAGDRLVAARSLFGSCFVVCSEILPRWGVQTVFVDGDDLSQWERALSVPTQAVFFETPSNPMQSLVDIAAVTELAHAAGAKVVLDNVFATPLLQQGFPLGVDVVVYSGTKHIDGQGRVLGGAILGDREYIDGPVQKLMRHTGPAMSAFNAWVLLKGLETLAIRVQHSNASAQRIAEFLNGHPSVRWVRYPYLPSHPQYDLAKRQMSGGGTVVTFALDCPEDVAKQRAFEVLDKMRLIDISNNLGDAKSLVTHPATTTHRAMGPEGRAAIGLGDGVVRISVGLEDTDDLIADIDRALS.

Residue Lys-219 is modified to N6-(pyridoxal phosphate)lysine.

The protein belongs to the trans-sulfuration enzymes family. MetZ subfamily. Homotetramer. Requires pyridoxal 5'-phosphate as cofactor.

The enzyme catalyses O-succinyl-L-homoserine + hydrogen sulfide = L-homocysteine + succinate. The protein operates within amino-acid biosynthesis; L-methionine biosynthesis via de novo pathway; L-homocysteine from O-succinyl-L-homoserine: step 1/1. Catalyzes the formation of L-homocysteine from O-succinyl-L-homoserine (OSHS) and hydrogen sulfide. This chain is O-succinylhomoserine sulfhydrylase, found in Mycobacterium tuberculosis (strain CDC 1551 / Oshkosh).